We begin with the raw amino-acid sequence, 283 residues long: MSSITLQSYASRAAKQPNPAAKALLECMERKQTNLCVSIDVTNKQDLLDVCEAVGRNVCLVKTHIDIVEDFDMDLVHQLTQLSEKHDFLIFEDRKFADIGNTVSLQYSAGVHKIASWSHITNAHLVPGPSVISGLAKVGQPLGRGLLLLAEMSSEGALTKGDYTQACVDEAHKDTTGFVCGFIAMSRVDERERANTHRDLLILTPGVGLDVKGDGLGQQYRTPDQVIRESGCDVIIVGRGIYGALTTEEGKADKKAAFAKVSEQGERYKTAGWDAYLKRIGQK.

Residues D40, 62–64 (KTH), 93–102 (DRKFADIGNT), Y220, and R239 each bind substrate. K95 (proton donor) is an active-site residue.

Belongs to the OMP decarboxylase family.

The enzyme catalyses orotidine 5'-phosphate + H(+) = UMP + CO2. The protein operates within pyrimidine metabolism; UMP biosynthesis via de novo pathway; UMP from orotate: step 2/2. The protein is Orotidine 5'-phosphate decarboxylase (PYR6) of Mycosarcoma maydis (Corn smut fungus).